A 422-amino-acid chain; its full sequence is Cyclin-A2 (422 aa).

Methionine 1 carries the N-acetylmethionine modification. Residues methionine 1–arginine 62 form a disordered region. Serine 5 is modified (phosphoserine).

This sequence belongs to the cyclin family. Cyclin AB subfamily. Interacts with the CDK1 and CDK2 protein kinases to form serine/threonine kinase holoenzyme complexes. Interacts with CDK1 (hyperphosphorylated form in G1 and underphosphorylated forms in S and G2). Interacts with CDK2; the interaction increases from G1 to G2. Interacts (associated with CDK2 but not with CDK1) with SCAPER; regulates the activity of CCNA2/CDK2 by transiently maintaining CCNA2 in the cytoplasm. Forms a ternary complex with CDK2 and CDKN1B; CDKN1B inhibits the kinase activity of CDK2 through conformational rearrangements. Interacts with INCA1. In terms of assembly, (Microbial infection) Interacts with mouse cytomegalovirus/MCMV kinase M97; this interaction sequesters CCNA2 to the cytoplasm. In terms of processing, polyubiquitinated via 'Lys-11'-linked ubiquitin by the anaphase-promoting complex (APC/C), leading to its degradation by the proteasome. Deubiquitinated and stabilized by USP37 enables entry into S phase. Ubiquitinated during the G1 phase by the SCF(FBXO31) complex, leading to its proteasomal degradation. In terms of tissue distribution, ubiquitous. In the testis, expressed in germ cells and in the ovary, in both germline and somatic cells.

It localises to the nucleus. It is found in the cytoplasm. In terms of biological role, cyclin which controls both the G1/S and the G2/M transition phases of the cell cycle. Functions through the formation of specific serine/threonine kinase holoenzyme complexes with the cyclin-dependent protein kinases CDK1 and CDK2. The cyclin subunit confers the substrate specificity of these complexes and differentially interacts with and activates CDK1 and CDK2 throughout the cell cycle. In Mus musculus (Mouse), this protein is Cyclin-A2.